We begin with the raw amino-acid sequence, 361 residues long: MSDAIRPQPGILDIALYEGGKSHVAGIQNALKLSSNENPFGPSPKAKEAFLRSVHTLHRYPSTDHAGLRHAIAEVHGLDPARVICGVGSDEIITFLCQAYAGPHTDVVFTEHGFLMYRISALAVGANPVEVPERERTTDVDAILAACTPHTRLVFLANPNNPTGTMIGQADLARLAAGLPAQAILVLDGAYAEYVPGYDAGLALIEERGNVVMTRTFSKIYGLGGLRVGWGYGPKSIIDVLNRIRGPFNLSTTQLETAEAAVRDQDHVARCRADNARWRIWLAEALAEIGVPSDTSMANFILARFSDTEEAEACDLHLQTQGLIVRRVAGYKLPHCLRITIGDEASCRRVAHAIGQFKRMR.

Lys-219 carries the post-translational modification N6-(pyridoxal phosphate)lysine.

It belongs to the class-II pyridoxal-phosphate-dependent aminotransferase family. Histidinol-phosphate aminotransferase subfamily. As to quaternary structure, homodimer. The cofactor is pyridoxal 5'-phosphate.

It catalyses the reaction L-histidinol phosphate + 2-oxoglutarate = 3-(imidazol-4-yl)-2-oxopropyl phosphate + L-glutamate. It functions in the pathway amino-acid biosynthesis; L-histidine biosynthesis; L-histidine from 5-phospho-alpha-D-ribose 1-diphosphate: step 7/9. The protein is Histidinol-phosphate aminotransferase of Cereibacter sphaeroides (strain KD131 / KCTC 12085) (Rhodobacter sphaeroides).